Consider the following 100-residue polypeptide: Large ribosomal subunit protein eL14 (100 aa).

Belongs to the eukaryotic ribosomal protein eL14 family.

This chain is Large ribosomal subunit protein eL14, found in Aeropyrum pernix (strain ATCC 700893 / DSM 11879 / JCM 9820 / NBRC 100138 / K1).